The sequence spans 465 residues: Ribulose bisphosphate carboxylase large chain (465 aa).

The residue at position 4 (Lys-4) is an N6,N6,N6-trimethyllysine. Asn-113 and Thr-163 together coordinate substrate. Lys-165 serves as the catalytic Proton acceptor. Lys-167 provides a ligand contact to substrate. The Mg(2+) site is built by Lys-191, Asp-193, and Glu-194. The residue at position 191 (Lys-191) is an N6-carboxylysine. His-284 acts as the Proton acceptor in catalysis. The substrate site is built by Arg-285, His-317, and Ser-369.

Belongs to the RuBisCO large chain family. Type I subfamily. As to quaternary structure, heterohexadecamer of 8 large chains and 8 small chains; disulfide-linked. The disulfide link is formed within the large subunit homodimers. Requires Mg(2+) as cofactor. The disulfide bond which can form in the large chain dimeric partners within the hexadecamer appears to be associated with oxidative stress and protein turnover.

It is found in the plastid. Its subcellular location is the chloroplast. It catalyses the reaction 2 (2R)-3-phosphoglycerate + 2 H(+) = D-ribulose 1,5-bisphosphate + CO2 + H2O. The catalysed reaction is D-ribulose 1,5-bisphosphate + O2 = 2-phosphoglycolate + (2R)-3-phosphoglycerate + 2 H(+). Its function is as follows. RuBisCO catalyzes two reactions: the carboxylation of D-ribulose 1,5-bisphosphate, the primary event in carbon dioxide fixation, as well as the oxidative fragmentation of the pentose substrate in the photorespiration process. Both reactions occur simultaneously and in competition at the same active site. In Cornus oblonga, this protein is Ribulose bisphosphate carboxylase large chain.